Here is a 101-residue protein sequence, read N- to C-terminus: Small ribosomal subunit protein uS14 (101 aa).

Positions 1-10 are enriched in basic and acidic residues; the sequence is MAKKSSVEKN. Positions 1–23 are disordered; it reads MAKKSSVEKNNRRKRMAKNAAPK. The segment covering 11 to 23 has biased composition (basic residues); sequence NRRKRMAKNAAPK.

Belongs to the universal ribosomal protein uS14 family. As to quaternary structure, part of the 30S ribosomal subunit. Contacts proteins S3 and S10.

Binds 16S rRNA, required for the assembly of 30S particles and may also be responsible for determining the conformation of the 16S rRNA at the A site. The chain is Small ribosomal subunit protein uS14 from Bradyrhizobium sp. (strain BTAi1 / ATCC BAA-1182).